We begin with the raw amino-acid sequence, 210 residues long: Na(+)-translocating NADH-quinone reductase subunit D (210 aa).

The next 5 helical transmembrane spans lie at 42–62, 72–92, 103–123, 131–151, and 178–198; these read FVMT…VSLI, IIVQ…VLKA, VFVG…AFAM, LIDG…VGFF, and NGLM…IWVI.

Belongs to the NqrDE/RnfAE family. In terms of assembly, composed of six subunits; NqrA, NqrB, NqrC, NqrD, NqrE and NqrF.

It is found in the cell inner membrane. The enzyme catalyses a ubiquinone + n Na(+)(in) + NADH + H(+) = a ubiquinol + n Na(+)(out) + NAD(+). Functionally, NQR complex catalyzes the reduction of ubiquinone-1 to ubiquinol by two successive reactions, coupled with the transport of Na(+) ions from the cytoplasm to the periplasm. NqrA to NqrE are probably involved in the second step, the conversion of ubisemiquinone to ubiquinol. The polypeptide is Na(+)-translocating NADH-quinone reductase subunit D (Vibrio parahaemolyticus serotype O3:K6 (strain RIMD 2210633)).